A 270-amino-acid chain; its full sequence is uncharacterized protein (270 aa).

Disordered stretches follow at residues 1 to 21 (MSTNINEEKCLEGDDIKYEKP) and 53 to 77 (PNILSSKHDGDKNKNDKKKEDAKLN). Basic and acidic residues predominate over residues 58 to 75 (SKHDGDKNKNDKKKEDAK). The stretch at 182–270 (EENKSREEKH…KIEDNLNTYE (89 aa)) forms a coiled coil.

This is an uncharacterized protein from Plasmodium falciparum (isolate 3D7).